The sequence spans 247 residues: RNA polymerase sigma factor FliA (247 aa).

Residues 22-94 (LIQRYAPLVK…MLDEVRKGDW (73 aa)) form a sigma-70 factor domain-2 region. Positions 49-52 (DLMQ) match the Interaction with polymerase core subunit RpoC motif. The tract at residues 102-171 (NTRMVTDAIR…GLPEDTSLSH (70 aa)) is sigma-70 factor domain-3. A sigma-70 factor domain-4 region spans residues 190-238 (AIAKLPERERLVLALYYDEELNLKEIGEVLGVSESRVSQLHSQCAARLR). Residues 212–231 (LKEIGEVLGVSESRVSQLHS) constitute a DNA-binding region (H-T-H motif).

The protein belongs to the sigma-70 factor family. FliA subfamily.

Its subcellular location is the cytoplasm. Sigma factors are initiation factors that promote the attachment of RNA polymerase to specific initiation sites and are then released. This sigma factor controls the expression of flagella-related genes. Required for the flagellin gene (fliC) expression. This chain is RNA polymerase sigma factor FliA, found in Pseudomonas aeruginosa (strain ATCC 15692 / DSM 22644 / CIP 104116 / JCM 14847 / LMG 12228 / 1C / PRS 101 / PAO1).